A 414-amino-acid chain; its full sequence is Probable cell wall biosynthesis protein LcpB (414 aa).

A disordered region spans residues 1–108; the sequence is MDSPGQGEIA…PPVIAGDGGR (108 aa). Residues 1–120 lie on the Cytoplasmic side of the membrane; sequence MDSPGQGEIA…KAISFKPRGC (120 aa). The span at 9–23 shows a compositional bias: basic and acidic residues; the sequence is IARDSQGRPILDRYG. The span at 33–42 shows a compositional bias: pro residues; it reads RQTPPTPRTP. Low complexity predominate over residues 43–53; sequence PVNETRVYQPR. The segment covering 54–80 has biased composition (pro residues); the sequence is QTPPRQTPPRQTPPRQMPPRQTPPRQV. A helical membrane pass occupies residues 121 to 141; sequence LGTIAGVLAVGLVLVFVVTLW. The Periplasmic portion of the chain corresponds to 142–414; sequence ADSKLNRVDA…GAEALFSSMR (273 aa).

Belongs to the LytR/CpsA/Psr (LCP) family.

It localises to the cell inner membrane. This is Probable cell wall biosynthesis protein LcpB from Corynebacterium glutamicum (strain ATCC 13032 / DSM 20300 / JCM 1318 / BCRC 11384 / CCUG 27702 / LMG 3730 / NBRC 12168 / NCIMB 10025 / NRRL B-2784 / 534).